Reading from the N-terminus, the 349-residue chain is Ferredoxin--NADP reductase 1 (349 aa).

Positions 36, 44, 48, 88, 123, 290, and 331 each coordinate FAD.

The protein belongs to the ferredoxin--NADP reductase type 2 family. In terms of assembly, homodimer. FAD is required as a cofactor.

The catalysed reaction is 2 reduced [2Fe-2S]-[ferredoxin] + NADP(+) + H(+) = 2 oxidized [2Fe-2S]-[ferredoxin] + NADPH. The chain is Ferredoxin--NADP reductase 1 from Bacillus cereus (strain ATCC 10987 / NRS 248).